We begin with the raw amino-acid sequence, 196 residues long: Carnitine operon protein CaiE (196 aa).

Residues 173-196 (TQPLRQMEENRPRLQGTTDVTPKR) are disordered. Polar residues predominate over residues 187-196 (QGTTDVTPKR).

It belongs to the transferase hexapeptide repeat family.

Its pathway is amine and polyamine metabolism; carnitine metabolism. Overproduction of CaiE stimulates the activity of CaiB and CaiD. The polypeptide is Carnitine operon protein CaiE (Escherichia coli O7:K1 (strain IAI39 / ExPEC)).